The following is a 166-amino-acid chain: Arginine repressor (166 aa).

It belongs to the ArgR family.

It is found in the cytoplasm. It functions in the pathway amino-acid biosynthesis; L-arginine biosynthesis [regulation]. Functionally, regulates arginine biosynthesis genes. This is Arginine repressor from Mycobacterium ulcerans (strain Agy99).